Reading from the N-terminus, the 217-residue chain is Thymidylate kinase (217 aa).

An ATP-binding site is contributed by 7-14 (GIEGAGKS).

Belongs to the thymidylate kinase family.

It carries out the reaction dTMP + ATP = dTDP + ADP. Functionally, phosphorylation of dTMP to form dTDP in both de novo and salvage pathways of dTTP synthesis. In Desulfovibrio desulfuricans (strain ATCC 27774 / DSM 6949 / MB), this protein is Thymidylate kinase.